The sequence spans 272 residues: CD40 ligand (272 aa).

The Cytoplasmic segment spans residues 1–23 (MNEAYSPAAPRPMGSTSPSTMKM). The chain crosses the membrane as a helical; Signal-anchor for type II membrane protein span at residues 24-44 (FMCFLSVFMVVQTIGTVLFCL). Residues 45 to 272 (YLHMKMDKME…GNTYFGMFKL (228 aa)) are Extracellular-facing. N-linked (GlcNAc...) asparagine glycosylation is found at Asn124 and Asn146. In terms of domain architecture, THD spans 136–272 (IATHLAGVKS…GNTYFGMFKL (137 aa)). A disulfide bond links Cys190 and Cys229. N-linked (GlcNAc...) asparagine glycosylation occurs at Asn251.

The protein belongs to the tumor necrosis factor family. As to quaternary structure, homotrimer. Interacts with CD28. CD40 ligand, soluble form: Exists as either a monomer or a homotrimer. Forms a ternary complex between CD40 and integrins for CD40-CD40LG signaling. In terms of processing, the soluble form derives from the membrane form by proteolytic processing.

The protein resides in the cell membrane. Its subcellular location is the cell surface. The protein localises to the secreted. In terms of biological role, cytokine that acts as a ligand to CD40/TNFRSF5. Costimulates T-cell proliferation and cytokine production. Induces the activation of NF-kappa-B. Mediates B-cell proliferation in the absence of co-stimulus as well as IgE production in the presence of IL4. Involved in immunoglobulin class switching. Its function is as follows. Acts as a ligand for integrins, specifically ITGA5:ITGB1 and ITGAV:ITGB3; both integrins and the CD40 receptor are required for activation of CD40-CD40LG signaling, which have cell-type dependent effects, such as B-cell activation, NF-kappa-B signaling and anti-apoptotic signaling. The protein is CD40 ligand (CD40LG) of Gallus gallus (Chicken).